The following is a 43-amino-acid chain: Iota-conotoxin-like Fi11.6 (43 aa).

Intrachain disulfides connect cysteine 2–cysteine 16, cysteine 9–cysteine 19, cysteine 15–cysteine 24, and cysteine 18–cysteine 35. A 4-hydroxyproline modification is found at proline 8. The residue at position 26 (proline 26) is a 4-hydroxyproline. Tryptophan 30 carries the 6'-bromotryptophan modification. Phenylalanine 41 is modified (D-phenylalanine).

The protein belongs to the conotoxin I1 superfamily. Expressed by the venom duct.

It is found in the secreted. In terms of biological role, iota-conotoxins bind to voltage-gated sodium channels (Nav) and act as agonists by shifting the voltage-dependence of activation to more hyperpolarized levels. Produces general excitatory symptoms. This is Iota-conotoxin-like Fi11.6 from Conus figulinus (Fig cone).